The chain runs to 390 residues: 4-hydroxy-3-methylbut-2-en-1-yl diphosphate synthase (flavodoxin) (390 aa).

The [4Fe-4S] cluster site is built by Cys-281, Cys-284, Cys-316, and Glu-323.

Belongs to the IspG family. It depends on [4Fe-4S] cluster as a cofactor.

It catalyses the reaction (2E)-4-hydroxy-3-methylbut-2-enyl diphosphate + oxidized [flavodoxin] + H2O + 2 H(+) = 2-C-methyl-D-erythritol 2,4-cyclic diphosphate + reduced [flavodoxin]. Its pathway is isoprenoid biosynthesis; isopentenyl diphosphate biosynthesis via DXP pathway; isopentenyl diphosphate from 1-deoxy-D-xylulose 5-phosphate: step 5/6. Its function is as follows. Converts 2C-methyl-D-erythritol 2,4-cyclodiphosphate (ME-2,4cPP) into 1-hydroxy-2-methyl-2-(E)-butenyl 4-diphosphate. The polypeptide is 4-hydroxy-3-methylbut-2-en-1-yl diphosphate synthase (flavodoxin) (Salinispora tropica (strain ATCC BAA-916 / DSM 44818 / JCM 13857 / NBRC 105044 / CNB-440)).